The following is a 469-amino-acid chain: Glutamate--tRNA ligase 1 (469 aa).

Positions 10-20 (PSPTGYLHVGG) match the 'HIGH' region motif. The short motif at 252 to 256 (KLSKR) is the 'KMSKS' region element. Residue K255 participates in ATP binding.

The protein belongs to the class-I aminoacyl-tRNA synthetase family. Glutamate--tRNA ligase type 1 subfamily. Monomer.

It is found in the cytoplasm. It carries out the reaction tRNA(Glu) + L-glutamate + ATP = L-glutamyl-tRNA(Glu) + AMP + diphosphate. Catalyzes the attachment of glutamate to tRNA(Glu) in a two-step reaction: glutamate is first activated by ATP to form Glu-AMP and then transferred to the acceptor end of tRNA(Glu). The sequence is that of Glutamate--tRNA ligase 1 from Fervidobacterium nodosum (strain ATCC 35602 / DSM 5306 / Rt17-B1).